The following is a 273-amino-acid chain: Glutamate racemase (273 aa).

Substrate-binding positions include aspartate 10–serine 11 and tyrosine 42–glycine 43. Cysteine 73 (proton donor/acceptor) is an active-site residue. Asparagine 74 to threonine 75 is a substrate binding site. The active-site Proton donor/acceptor is the cysteine 184. Threonine 185 to histidine 186 serves as a coordination point for substrate.

This sequence belongs to the aspartate/glutamate racemases family.

It carries out the reaction L-glutamate = D-glutamate. Its pathway is cell wall biogenesis; peptidoglycan biosynthesis. Its function is as follows. Provides the (R)-glutamate required for cell wall biosynthesis. In Desulforudis audaxviator (strain MP104C), this protein is Glutamate racemase.